Reading from the N-terminus, the 1513-residue chain is Protein tincar (1513 aa).

Topologically, residues 1-77 (MGGKHQGSGA…DSGSYLHLNS (77 aa)) are cytoplasmic. A helical transmembrane segment spans residues 78 to 98 (LWSIWYGVMLTLFQGYLAMHG). Topologically, residues 99–120 (AYRFLGCSLIPWKIEPVAELNL) are extracellular. Residues 121 to 141 (QIVLSGVVFILLPVFFTSAVF) form a helical membrane-spanning segment. At 142–181 (KVGNLANDGIKLATGARERRCTLSPHDGLEEESRGGTLRA) the chain is on the cytoplasmic side. The chain crosses the membrane as a helical span at residues 182–202 (LWTHGGPTAAFVHIVIALCLL). Residues 203 to 668 (LPRLLLEARI…VAIFSQPPSA (466 aa)) lie on the Extracellular side of the membrane. Disordered regions lie at residues 247–266 (TPFP…HQHG), 354–373 (ERQE…DEGV), and 383–532 (MPDF…SIHR). The segment covering 427–466 (ASSSSSSTTSTTTTTTTSTTTTAATTTSTRGTSTTTTTTT) has biased composition (low complexity). The span at 478–507 (SAHHHHGKSRKHHKHHNKQRQQQPPRRHHV) shows a compositional bias: basic residues. Positions 523–532 (TTTRDSSIHR) are enriched in basic and acidic residues. Residues 669 to 689 (EFVNLLCALLVWSVRYPAVFW) traverse the membrane as a helical segment. Topologically, residues 690–696 (NTSKAFA) are cytoplasmic. A helical membrane pass occupies residues 697–717 (CVFSLQMVVAALDIILGYVGI). Residues 718–736 (SNLYKLQIYAEAMPVHQPG) lie on the Extracellular side of the membrane. A helical membrane pass occupies residues 737–757 (LILNAVVTLALYLLSTALVLA). Over 758-787 (SSMVMYLYGHGRLATRMRDRSIITLKTHQT) the chain is Cytoplasmic. The chain crosses the membrane as a helical span at residues 788 to 808 (WIYFAHCASLCFVLALAVVKA). Residues 809–826 (PLLNDLSATYKNNLHCPT) are Extracellular-facing. A helical transmembrane segment spans residues 827-847 (FLAALVGVTHLLLWIVIWLCL). The Cytoplasmic portion of the chain corresponds to 848-1513 (TIKRRWHFKL…CGLYVTAQLH (666 aa)). Composition is skewed to low complexity over residues 879–903 (SSGQ…VNGG) and 1060–1071 (QQQQQQQQQQRQ). Disordered stretches follow at residues 879–913 (SSGQ…MSTA), 1045–1090 (EYDE…SGLG), 1115–1155 (ASTS…HSAG), 1173–1214 (EHHH…PHQH), and 1231–1335 (AHIA…DPAA). The segment covering 1122–1149 (PPQPSAQAPPPPPPLPIKGAPVPQPPAV) has biased composition (pro residues). Low complexity-rich tracts occupy residues 1179-1208 (LQHS…LQQQ) and 1255-1285 (TPRS…SGVH). Over residues 1286 to 1296 (SGEERELEVII) the composition is skewed to basic and acidic residues. Residues 1303–1314 (KPPPRPPQPPIQ) show a composition bias toward pro residues. Residues 1324–1335 (MRMSSFNADPAA) are compositionally biased toward polar residues.

As to expression, expression varies in tissues throughout development. At stage 5, expressed in the embryo dorsal region followed by expression in a striped pattern at stage 6. During gastrulation, expressed in ventral region and ventral nerve cord. Also detected in many neurons in the externa sensilla and chordotonal organ. At stage 16, expressed on the surface of the midgut. Additionally, expressed in a subset of cardioblasts (Tin+ subpopulation) during dorsal vessel formation. In third-instar larval tissues, expressed in the eye and antennal disks. In the antennal disks, expressed in the second antennal segments. In the eye disks, strongest expression found in the ocelli, and in the differentiating ommatidial cells. Also expressed in all cells within and in the vicinity of the morphogenetic furrow.

The protein resides in the membrane. Its function is as follows. Involved in eye morphogenesis. May be essential for the normal differentiation of ommatidial cells. This Drosophila melanogaster (Fruit fly) protein is Protein tincar (tinc).